The sequence spans 372 residues: Stress-activated protein kinase JNK (372 aa).

Positions 24–320 (YINLRPIGSG…VDEALKHEYI (297 aa)) constitute a Protein kinase domain. Residues 31–36 (GSGAQG) and K53 contribute to the ATP site. D149 acts as the Proton acceptor in catalysis. The residue at position 181 (T181) is a Phosphothreonine. The short motif at 181 to 183 (TPY) is the TXY element. Residue Y183 is modified to Phosphotyrosine.

This sequence belongs to the protein kinase superfamily. CMGC Ser/Thr protein kinase family. MAP kinase subfamily. In terms of assembly, interacts with MKP-4 (via tyrosine-protein phosphatase domain); the interaction dephosphorylates bsk. Requires Mg(2+) as cofactor. Post-translationally, dually phosphorylated on Thr-181 and Tyr-183, which activates the enzyme. In terms of tissue distribution, during gastrulation, expression is seen in cells undergoing morphogenetic movements. By stage 9 of embryonic development, expression is ubiquitous. At stages 12-14, expression occurs in epidermis and central nervous system. At stage 15, expression is restricted to ventral nerve cord, brain and some peripheral neurons. In larvae, expression is seen in all imaginal disks, with highest levels in wing and eye disks, and in the CNS. Adults express the protein in fat body and hemocytes.

It is found in the nucleus. The protein localises to the cytoplasm. The catalysed reaction is L-seryl-[protein] + ATP = O-phospho-L-seryl-[protein] + ADP + H(+). It carries out the reaction L-threonyl-[protein] + ATP = O-phospho-L-threonyl-[protein] + ADP + H(+). With respect to regulation, activated by threonine and tyrosine phosphorylation by the dual specificity kinase, hep. Inhibited by dual specificity phosphatase, puckered. In terms of biological role, mitogen-activated protein kinase and key component of the c-Jun N-terminal kinase (JNK) pathway which phosphorylate and activate transcription factors involved in a wide range of biological processes including response to various stresses, cellular proliferation, differentiation and migration, and regulation of cell shape. Responds to activation by environmental stress by phosphorylating a number of transcription factors, primarily components of AP-1 such as Jra and also the transcriptional repressor aop, and thus regulates transcriptional activity. Component of the immune response activated by bacterial infection, and is involved in wound healing and in dorsal closure, a morphogenetic movement during embryogenesis. Functions in the systematic response to wounding acting downstream of the Hayan-phenoloxidase PPO1 cascade. During epidermal wound healing involved in cellular polarization by inducing the translocation of sktl and mys/integrin beta to the trailing edge. Exhibits cytoprotective activity in neuronal cells in response to wounding to the integument. Controls the expression of a phosphatase, puckered, at the edges of wounded epidermal tissue and in the dorsal epithelium during dorsal closure. Regulates the activity of SREBP in neurons and thereby the accumulation of lipids in glia. Plays a role in positively regulating the expression of DIP2 independently of AP-1, thereby ensuring proper axon guidance in mushroom bodies. In enterocytes and differentiating progenitors of the gut that are experiencing inorganic phosphate (Pi) deficiency, activated by Cka to induce nearby progenitor cells to proliferate and form new absorptive cells, probably helping the organism to cope with the nutrient deficiency by maximizing absorption of dietary Pi. The sequence is that of Stress-activated protein kinase JNK from Drosophila melanogaster (Fruit fly).